Consider the following 332-residue polypeptide: Putative peptide import ATP-binding protein BruAb2_1033 (332 aa).

The ABC transporter domain maps to 11 to 261 (LEVSNLSVDF…PLHPYTEGLL (251 aa)). An ATP-binding site is contributed by 47–54 (GESGSGKS).

It belongs to the ABC transporter superfamily. In terms of assembly, the complex is composed of two ATP-binding proteins (BruAb2_1033 and BruAb2_1034), two transmembrane proteins (BruAb2_1031 and BruAb2_1032) and a solute-binding protein (BruAb2_1030).

The protein localises to the cell inner membrane. In terms of biological role, probably part of an ABC transporter complex that could be involved in peptide import. Probably responsible for energy coupling to the transport system. This is Putative peptide import ATP-binding protein BruAb2_1033 from Brucella abortus biovar 1 (strain 9-941).